The primary structure comprises 150 residues: Large ribosomal subunit protein bL9 (150 aa).

The protein belongs to the bacterial ribosomal protein bL9 family.

Functionally, binds to the 23S rRNA. In Shewanella piezotolerans (strain WP3 / JCM 13877), this protein is Large ribosomal subunit protein bL9.